A 224-amino-acid chain; its full sequence is Phosphoglycolate phosphatase (224 aa).

Aspartate 11 serves as the catalytic Nucleophile. Mg(2+) is bound by residues aspartate 11, aspartate 13, and aspartate 177.

This sequence belongs to the HAD-like hydrolase superfamily. CbbY/CbbZ/Gph/YieH family. It depends on Mg(2+) as a cofactor.

It carries out the reaction 2-phosphoglycolate + H2O = glycolate + phosphate. It functions in the pathway organic acid metabolism; glycolate biosynthesis; glycolate from 2-phosphoglycolate: step 1/1. Its function is as follows. Specifically catalyzes the dephosphorylation of 2-phosphoglycolate. Is involved in the dissimilation of the intracellular 2-phosphoglycolate formed during the DNA repair of 3'-phosphoglycolate ends, a major class of DNA lesions induced by oxidative stress. This is Phosphoglycolate phosphatase from Mannheimia succiniciproducens (strain KCTC 0769BP / MBEL55E).